A 411-amino-acid chain; its full sequence is F-box/kelch-repeat protein At3g61590 (411 aa).

Residues 37–83 (FSMDSLLPDDLLERILSFLPIASIFRAGTVCKRWNEIVSSRRFLCNF) form the F-box domain. 6 Kelch repeats span residues 81-135 (CNFS…SSCG), 137-178 (VCFM…MSTS), 196-246 (SIVK…ICNN), 251-299 (MIYS…LMNL), 302-350 (RLVI…EFDE), and 352-401 (FASS…FTGF).

In terms of assembly, part of a SCF (ASK-cullin-F-box) protein ligase complex. Interacts with SKP1A/ASK1, SKP1B/ASK2, ASK3, ASK9, ASK11, ASK12, ASK13, ASK14, ASK16 and ASK18.

The protein operates within protein modification; protein ubiquitination. Functionally, component of SCF(ASK-cullin-F-box) E3 ubiquitin ligase complexes, which may mediate the ubiquitination and subsequent proteasomal degradation of target proteins. This chain is F-box/kelch-repeat protein At3g61590, found in Arabidopsis thaliana (Mouse-ear cress).